A 555-amino-acid polypeptide reads, in one-letter code: Neutral amino acid transporter B(0) (555 aa).

Residue M1 is modified to N-acetylmethionine. The Cytoplasmic portion of the chain corresponds to 1–52 (MAVDPPKADPKGVVAVDPTANCGSGLKSREDQGAKAGGCCSSRDQVCRCLRA). A helical membrane pass occupies residues 53 to 82 (NLLVLLTVAAAVAGVVLGLGVSAAGGAEAL). Residues 83–95 (GHARFTAFAFPGE) lie on the Extracellular side of the membrane. Residues 96–117 (LLLRLLEMIILPLVVCSLIGGA) traverse the membrane as a helical segment. At 118–131 (ASLDPSALGRLGAW) the chain is on the cytoplasmic side. Residues 132 to 154 (ALLFFLVTTLLSSALGVALALAL) traverse the membrane as a helical segment. Over 155–239 (KPGAAFAAIN…SNATMDQPHC (85 aa)) the chain is Extracellular. 2 N-linked (GlcNAc...) asparagine glycosylation sites follow: N164 and N231. Residues 240–262 (EMKMNILGLVVFAIVFGVALRKL) traverse the membrane as a helical segment. Residues 263-271 (GPEGELLIR) are Cytoplasmic-facing. Residues 272-299 (FFNSFNDATMVLVSWIMWYAPIGILFLV) traverse the membrane as a helical segment. The Extracellular portion of the chain corresponds to 300-320 (AGKIVEMKDIRQLFIGLGKYI). The chain crosses the membrane as a helical span at residues 321–342 (VCCLLGHAIHGLLVLPLIYFLF). Residues 343–347 (TRKNP) lie on the Cytoplasmic side of the membrane. Positions 348 to 378 (YRFLWGIVTPLATAFGTSSSSATLPLMMKCV) form an intramembrane region, discontinuously helical. Residues 379 to 387 (EEKNGVAKH) lie on the Cytoplasmic side of the membrane. A helical membrane pass occupies residues 388 to 414 (ISRFILPIGATVNMDGAALFQCVAAVF). Residues G396, T398, and N400 each contribute to the Na(+) site. Residues 415-427 (IAQLNGMSLDFVK) are Extracellular-facing. The segment at residues 428 to 461 (IITILVTATASSVGAAGIPAGGVLTLAIILEAIS) is an intramembrane region (discontinuously helical). The Extracellular portion of the chain corresponds to 462-474 (LPVKDISLILAVD). Residues 475–496 (WLVDRSCTVLNVEGDAFGAGLL) form a helical membrane-spanning segment. Na(+)-binding residues include N485 and D489. The Cytoplasmic portion of the chain corresponds to 497 to 555 (QSYVDRTKMPSSEPELIQVKNDVSLKPLPLATEEGNPLLKQCREPSGDSSATCEKESVM). 5 positions are modified to phosphoserine: S507, S508, S520, S545, and S553. The segment at 534–555 (LLKQCREPSGDSSATCEKESVM) is disordered.

Belongs to the dicarboxylate/amino acid:cation symporter (DAACS) (TC 2.A.23) family. In terms of assembly, homotrimer.

The protein localises to the cell membrane. Its subcellular location is the melanosome. The catalysed reaction is L-glutamine(out) + L-serine(in) + Na(+)(out) = L-glutamine(in) + L-serine(out) + Na(+)(in). It catalyses the reaction L-glutamine(in) + L-serine(out) + Na(+)(out) = L-glutamine(out) + L-serine(in) + Na(+)(in). It carries out the reaction L-threonine(in) + L-glutamine(out) + Na(+)(out) = L-threonine(out) + L-glutamine(in) + Na(+)(in). The enzyme catalyses L-threonine(out) + L-glutamine(in) + Na(+)(out) = L-threonine(in) + L-glutamine(out) + Na(+)(in). The catalysed reaction is L-asparagine(in) + L-glutamine(out) + Na(+)(out) = L-asparagine(out) + L-glutamine(in) + Na(+)(in). It catalyses the reaction L-asparagine(out) + L-glutamine(in) + Na(+)(out) = L-asparagine(in) + L-glutamine(out) + Na(+)(in). It carries out the reaction L-glutamine(in) + L-alanine(out) + Na(+)(out) = L-glutamine(out) + L-alanine(in) + Na(+)(in). The enzyme catalyses L-valine(out) + L-glutamine(in) + Na(+)(out) = L-valine(in) + L-glutamine(out) + Na(+)(in). The catalysed reaction is L-glutamine(in) + L-methionine(out) + Na(+)(out) = L-glutamine(out) + L-methionine(in) + Na(+)(in). It catalyses the reaction L-glutamine(in) + L-glutamate(out) + Na(+)(out) + H(+)(out) = L-glutamine(out) + L-glutamate(in) + Na(+)(in) + H(+)(in). It carries out the reaction D-serine(in) + L-glutamine(out) + Na(+)(out) = D-serine(out) + L-glutamine(in) + Na(+)(in). The enzyme catalyses D-serine(in) + L-alanine(out) + Na(+)(out) = D-serine(out) + L-alanine(in) + Na(+)(in). The catalysed reaction is nitrate(in) = nitrate(out). It catalyses the reaction iodide(out) = iodide(in). It carries out the reaction thiocyanate(in) = thiocyanate(out). Its activity is regulated as follows. Down-regulated at acidic pH. Its function is as follows. Sodium-coupled antiporter of neutral amino acids. In a tri-substrate transport cycle, exchanges neutral amino acids between the extracellular and intracellular compartments, coupled to the inward cotransport of at least one sodium ion. The preferred substrate is the essential amino acid L-glutamine, a precursor for biosynthesis of proteins, nucleotides and amine sugars as well as an alternative fuel for mitochondrial oxidative phosphorylation. Exchanges L-glutamine with other neutral amino acids such as L-serine, L-threonine and L-asparagine in a bidirectional way. Provides L-glutamine to proliferating stem and activated cells driving the metabolic switch toward cell differentiation. The transport cycle is usually pH-independent, with the exception of L-glutamate. Transports extracellular L-glutamate coupled to the cotransport of one proton and one sodium ion in exchange for intracellular L-glutamine counter-ion. May provide for L-glutamate uptake in glial cells regulating glutamine/glutamate cycle in the nervous system. Can transport D-amino acids. Mediates D-serine release from the retinal glia potentially affecting NMDA receptor function in retinal neurons. Displays sodium- and amino acid-dependent but uncoupled channel-like anion conductance with a preference SCN(-) &gt;&gt; NO3(-) &gt; I(-) &gt; Cl(-). Through binding of the fusogenic protein syncytin-1/ERVW-1 may mediate trophoblasts syncytialization, the spontaneous fusion of their plasma membranes, an essential process in placental development. The chain is Neutral amino acid transporter B(0) (Slc1a5) from Rattus norvegicus (Rat).